Reading from the N-terminus, the 475-residue chain is ATP synthase subunit beta (475 aa).

152 to 159 (GGAGVGKT) provides a ligand contact to ATP.

This sequence belongs to the ATPase alpha/beta chains family. In terms of assembly, F-type ATPases have 2 components, CF(1) - the catalytic core - and CF(0) - the membrane proton channel. CF(1) has five subunits: alpha(3), beta(3), gamma(1), delta(1), epsilon(1). CF(0) has four main subunits: a(1), b(1), b'(1) and c(9-12).

The protein resides in the cell inner membrane. It carries out the reaction ATP + H2O + 4 H(+)(in) = ADP + phosphate + 5 H(+)(out). Produces ATP from ADP in the presence of a proton gradient across the membrane. The catalytic sites are hosted primarily by the beta subunits. In Cereibacter sphaeroides (strain ATCC 17025 / ATH 2.4.3) (Rhodobacter sphaeroides), this protein is ATP synthase subunit beta.